The primary structure comprises 142 residues: Hemoglobin subunit alpha (142 aa).

Positions 2 to 142 (VLSPADKTNV…VSTVLVSKYR (141 aa)) constitute a Globin domain. Residue Ser-4 is modified to Phosphoserine. An N6-succinyllysine modification is found at Lys-8. Thr-9 carries the phosphothreonine modification. Lys-12 carries the N6-succinyllysine modification. Lys-17 carries the N6-acetyllysine; alternate modification. N6-succinyllysine; alternate is present on Lys-17. At Tyr-25 the chain carries Phosphotyrosine. Ser-36 is subject to Phosphoserine. Lys-41 bears the N6-succinyllysine mark. Residue Ser-50 is modified to Phosphoserine. His-59 contributes to the O2 binding site. His-88 contacts heme b. Residue Ser-103 is modified to Phosphoserine. At Thr-109 the chain carries Phosphothreonine. Phosphoserine is present on residues Ser-125 and Ser-132. Phosphothreonine is present on Thr-135. At Ser-139 the chain carries Phosphoserine.

Belongs to the globin family. As to quaternary structure, heterotetramer of two alpha chains and two beta chains. Red blood cells.

Its function is as follows. Involved in oxygen transport from the lung to the various peripheral tissues. Hemopressin acts as an antagonist peptide of the cannabinoid receptor CNR1. Hemopressin-binding efficiently blocks cannabinoid receptor CNR1 and subsequent signaling. The polypeptide is Hemoglobin subunit alpha (HBA) (Antrozous pallidus (Pallid bat)).